Reading from the N-terminus, the 183-residue chain is Large ribosomal subunit protein uL6 (183 aa).

This sequence belongs to the universal ribosomal protein uL6 family. Part of the 50S ribosomal subunit.

In terms of biological role, this protein binds to the 23S rRNA, and is important in its secondary structure. It is located near the subunit interface in the base of the L7/L12 stalk, and near the tRNA binding site of the peptidyltransferase center. The sequence is that of Large ribosomal subunit protein uL6 from Mycoplasmoides gallisepticum (strain R(low / passage 15 / clone 2)) (Mycoplasma gallisepticum).